Here is a 208-residue protein sequence, read N- to C-terminus: Small ribosomal subunit protein uS4 (208 aa).

The region spanning 97-158 is the S4 RNA-binding domain; that stretch reads TRLDNVIYRM…RAQKYLCVQE (62 aa).

Belongs to the universal ribosomal protein uS4 family. In terms of assembly, part of the 30S ribosomal subunit. Contacts protein S5. The interaction surface between S4 and S5 is involved in control of translational fidelity.

Functionally, one of the primary rRNA binding proteins, it binds directly to 16S rRNA where it nucleates assembly of the body of the 30S subunit. With S5 and S12 plays an important role in translational accuracy. This is Small ribosomal subunit protein uS4 from Xylella fastidiosa (strain M12).